Consider the following 423-residue polypeptide: Gamma-glutamyl phosphate reductase (423 aa).

It belongs to the gamma-glutamyl phosphate reductase family.

The protein localises to the cytoplasm. It catalyses the reaction L-glutamate 5-semialdehyde + phosphate + NADP(+) = L-glutamyl 5-phosphate + NADPH + H(+). It functions in the pathway amino-acid biosynthesis; L-proline biosynthesis; L-glutamate 5-semialdehyde from L-glutamate: step 2/2. Catalyzes the NADPH-dependent reduction of L-glutamate 5-phosphate into L-glutamate 5-semialdehyde and phosphate. The product spontaneously undergoes cyclization to form 1-pyrroline-5-carboxylate. In Pseudomonas entomophila (strain L48), this protein is Gamma-glutamyl phosphate reductase.